The following is a 1116-amino-acid chain: uncharacterized protein (1116 aa).

4 EF-hand domains span residues 8-43 (EEQT…SGLA), 42-77 (LAPQ…VALA), 166-201 (LSTE…INLL), and 292-327 (LPED…IKLK). EH domains follow at residues 9–106 (EQTA…DSSK), 134–224 (EMTR…AAST), and 259–348 (DLTS…VAPL). Aspartate 305, asparagine 307, asparagine 309, lysine 311, and glutamate 316 together coordinate Ca(2+). Disordered stretches follow at residues 360–454 (PSVV…NSPT), 703–774 (SVNL…ASTV), 812–890 (TSLS…NTSA), 909–978 (PFAT…SPQI), 1004–1024 (TTTH…ENQY), 1044–1066 (SNEV…DDEL), and 1095–1116 (QAAE…AGHH). Pro residues predominate over residues 371 to 381 (NPNPTLAPNPT). The segment covering 401–416 (FSPTLAPQHTSSNATK) has biased composition (polar residues). Positions 565–707 (KAQTEQVNRE…EDGLKSVNLT (143 aa)) form a coiled coil. Residues 723 to 749 (SFTSNGITTDKPTLPDTTSSVPTQHNS) are compositionally biased toward polar residues. Low complexity-rich tracts occupy residues 755–774 (NTLR…ASTV) and 812–827 (TSLS…SLDS). Over residues 864 to 890 (SKLTGSARNTAEPVENTSAEPIENTSA) the composition is skewed to polar residues. A compositionally biased stretch (acidic residues) spans 957–969 (EIDDDESSSDEEP). Acidic residues-rich tracts occupy residues 1055 to 1066 (TANESDNDDDEL) and 1104 to 1116 (NSST…AGHH).

It localises to the cytoplasm. It is found in the cytoskeleton. This is an uncharacterized protein from Schizosaccharomyces pombe (strain 972 / ATCC 24843) (Fission yeast).